The following is a 138-amino-acid chain: 1,4-dihydroxy-2-naphthoyl-CoA hydrolase (138 aa).

The active site involves aspartate 15.

Belongs to the 4-hydroxybenzoyl-CoA thioesterase family. DHNA-CoA hydrolase subfamily.

It carries out the reaction 1,4-dihydroxy-2-naphthoyl-CoA + H2O = 1,4-dihydroxy-2-naphthoate + CoA + H(+). It participates in cofactor biosynthesis; phylloquinone biosynthesis. Its pathway is quinol/quinone metabolism; 1,4-dihydroxy-2-naphthoate biosynthesis; 1,4-dihydroxy-2-naphthoate from chorismate: step 7/7. Catalyzes the hydrolysis of 1,4-dihydroxy-2-naphthoyl-CoA (DHNA-CoA) to 1,4-dihydroxy-2-naphthoate (DHNA), a reaction involved in phylloquinone (vitamin K1) biosynthesis. This Trichodesmium erythraeum (strain IMS101) protein is 1,4-dihydroxy-2-naphthoyl-CoA hydrolase.